Consider the following 242-residue polypeptide: Lectin-like protein At1g53060 (242 aa).

Residues 3-237 are legume-lectin like; it reads FHGDAEYASE…RHEILDWSFE (235 aa). Serine 207 carries the phosphoserine modification.

It belongs to the leguminous lectin family.

The protein is Lectin-like protein At1g53060 of Arabidopsis thaliana (Mouse-ear cress).